The chain runs to 350 residues: Quinone oxidoreductase-like protein 2 (350 aa).

Position 36 is an N6-acetyllysine (lysine 36). N6-succinyllysine is present on lysine 201. 2 positions are modified to N6-acetyllysine: lysine 302 and lysine 328.

It belongs to the zinc-containing alcohol dehydrogenase family. Quinone oxidoreductase subfamily.

This chain is Quinone oxidoreductase-like protein 2, found in Rattus norvegicus (Rat).